The chain runs to 281 residues: Endochitinase At2g43610 (281 aa).

Positions 1-28 (MATQNAILKKALIIFLFTLTIMTGTAFS) are cleaved as a signal peptide. A Chitin-binding type-1 domain is found at 29–66 (QNCGTNGCKGNMCCSRWGYCGTTKAYCGTGCQSGPCNS). Disulfide bonds link cysteine 31-cysteine 42, cysteine 36-cysteine 48, cysteine 41-cysteine 55, and cysteine 59-cysteine 64. The segment at 86 to 281 (GTIASVITPA…GVTPGTNLSC (196 aa)) is catalytic. Glutamate 148 acts as the Proton donor in catalysis. The N-linked (GlcNAc...) asparagine glycan is linked to asparagine 278.

This sequence belongs to the glycosyl hydrolase 19 family. Chitinase class I subfamily.

The catalysed reaction is Random endo-hydrolysis of N-acetyl-beta-D-glucosaminide (1-&gt;4)-beta-linkages in chitin and chitodextrins.. The chain is Endochitinase At2g43610 from Arabidopsis thaliana (Mouse-ear cress).